The sequence spans 1399 residues: Meiosis-specific protein ASY2 (1399 aa).

An HORMA domain is found at 10–248; the sequence is QQSLILTTEL…SQHHVLTVKV (239 aa). Residues 257–266 are compositionally biased toward acidic residues; the sequence is PCEDENDNMQ. Disordered stretches follow at residues 257-281, 487-525, 617-656, 940-974, and 1045-1090; these read PCEDENDNMQDDERSKGPDSLHDDQ, SKPKVTMEELEEKLTPPSSEPKSAPPSSEPKSAPPSSEP, RLTGNPSNEAQSSRSNRIEIPTLLDEPDREGSGGHLAAPE, PPPPAPIEEERQPLDGEAAASNPPVSAGPSGVDQV, and DQDK…AAPK. Over residues 267 to 281 the composition is skewed to basic and acidic residues; sequence DDERSKGPDSLHDDQ. A compositionally biased stretch (pro residues) spans 509-523; the sequence is SAPPSSEPKSAPPSS. Residues 617 to 631 show a composition bias toward polar residues; it reads RLTGNPSNEAQSSRS. Positions 1205-1246 form a coiled coil; sequence MASLRDAAEIHKAEMSSLNDEVKRLNSREADLQKEFSDLQVA.

Its subcellular location is the chromosome. The protein resides in the nucleus. In terms of biological role, required for normal meiosis. The protein is Meiosis-specific protein ASY2 of Arabidopsis thaliana (Mouse-ear cress).